The primary structure comprises 113 residues: UPF0145 protein SynWH7803_1684 (113 aa).

The protein belongs to the UPF0145 family.

The sequence is that of UPF0145 protein SynWH7803_1684 from Synechococcus sp. (strain WH7803).